Here is a 217-residue protein sequence, read N- to C-terminus: Large ribosomal subunit protein uL1 (217 aa).

This sequence belongs to the universal ribosomal protein uL1 family.

The chain is Large ribosomal subunit protein uL1 (RpL10Ab) from Drosophila melanogaster (Fruit fly).